The sequence spans 492 residues: GTPase Obg (492 aa).

Residues 2–159 form the Obg domain; it reads PRFVDRVVIH…RELTLELKTV (158 aa). In terms of domain architecture, OBG-type G spans 160–340; it reads ADVGLIGFPS…LIFGLWQMIS (181 aa). GTP-binding positions include 166–173, 191–195, 212–215, 292–295, and 321–323; these read GFPSAGKS, FTTLV, DVPG, NKID, and STV. Positions 173 and 193 each coordinate Mg(2+). In terms of domain architecture, OCT spans 358–438; it reads PVPVDDSGFR…IGDMTFDWEP (81 aa). The interval 441–492 is disordered; the sequence is PAGQQVVLSGRGTDARLERTERVGAAERKAARRQRRTGDDAERGTTERGENT. 2 stretches are compositionally biased toward basic and acidic residues: residues 453-469 and 476-492; these read TDAR…AERK and RTGD…GENT.

It belongs to the TRAFAC class OBG-HflX-like GTPase superfamily. OBG GTPase family. In terms of assembly, monomer. The cofactor is Mg(2+).

It is found in the cytoplasm. An essential GTPase which binds GTP, GDP and possibly (p)ppGpp with moderate affinity, with high nucleotide exchange rates and a fairly low GTP hydrolysis rate. Plays a role in control of the cell cycle, stress response, ribosome biogenesis and in those bacteria that undergo differentiation, in morphogenesis control. The protein is GTPase Obg of Mycolicibacterium paratuberculosis (strain ATCC BAA-968 / K-10) (Mycobacterium paratuberculosis).